A 397-amino-acid polypeptide reads, in one-letter code: Transcription factor GATA-5 (397 aa).

Residues 48–116 (GCEPSPQPPE…SAGGRDGSAY (69 aa)) form a disordered region. Residues 87 to 101 (PPGATAFPFAHSPSG) are compositionally biased toward low complexity. Positions 102–112 (PGSGGSAGGRD) are enriched in gly residues. 2 GATA-type zinc fingers span residues 189 to 213 (CVNCGALSTPLWRRDGTGHYLCNAC) and 243 to 267 (CTNCHTTNTTLWRRNSEGEPVCNAC). The tract at residues 281-356 (AMKKESIQTR…ASGQEDDSLA (76 aa)) is disordered. Residues 289–298 (TRKRKPKTIA) show a composition bias toward basic residues. A compositionally biased stretch (low complexity) spans 310–335 (ASASPSAVASTDSSAATSKAKPSLAS).

The protein resides in the nucleus. Functionally, transcription factor required during cardiovascular development. Plays an important role in the transcriptional program(s) that underlies smooth muscle cell diversity. Binds to the functionally important CEF-1 nuclear protein binding site in the cardiac-specific slow/cardiac troponin C transcriptional enhancer. This is Transcription factor GATA-5 from Homo sapiens (Human).